Here is a 121-residue protein sequence, read N- to C-terminus: Small ribosomal subunit protein uS13 (121 aa).

The segment at 90–121 (RHRHGLPVRGQHTKNNARTRKGKAVAIAGKKK) is disordered.

The protein belongs to the universal ribosomal protein uS13 family. In terms of assembly, part of the 30S ribosomal subunit. Forms a loose heterodimer with protein S19. Forms two bridges to the 50S subunit in the 70S ribosome.

Located at the top of the head of the 30S subunit, it contacts several helices of the 16S rRNA. In the 70S ribosome it contacts the 23S rRNA (bridge B1a) and protein L5 of the 50S subunit (bridge B1b), connecting the 2 subunits; these bridges are implicated in subunit movement. Contacts the tRNAs in the A and P-sites. This chain is Small ribosomal subunit protein uS13, found in Limosilactobacillus fermentum (strain NBRC 3956 / LMG 18251) (Lactobacillus fermentum).